A 350-amino-acid polypeptide reads, in one-letter code: Ion-translocating oxidoreductase complex subunit D (350 aa).

A run of 4 helical transmembrane segments spans residues Y37–A57, A78–V109, A124–A144, and T158–I178. T185 is subject to FMN phosphoryl threonine. A run of 5 helical transmembrane segments spans residues S212–L232, W239–I259, F264–A284, L298–P318, and D319–V339.

This sequence belongs to the NqrB/RnfD family. As to quaternary structure, the complex is composed of six subunits: RnfA, RnfB, RnfC, RnfD, RnfE and RnfG. It depends on FMN as a cofactor.

It is found in the cell inner membrane. In terms of biological role, part of a membrane-bound complex that couples electron transfer with translocation of ions across the membrane. The chain is Ion-translocating oxidoreductase complex subunit D from Shewanella frigidimarina (strain NCIMB 400).